The chain runs to 418 residues: UDP-N-acetylglucosamine 1-carboxyvinyltransferase 1 (418 aa).

22-23 (KN) is a binding site for phosphoenolpyruvate. R94 is a binding site for UDP-N-acetyl-alpha-D-glucosamine. The active-site Proton donor is the C118. Residue C118 is modified to 2-(S-cysteinyl)pyruvic acid O-phosphothioketal. Residues 123-127 (RPIDL), D306, and I328 each bind UDP-N-acetyl-alpha-D-glucosamine.

It belongs to the EPSP synthase family. MurA subfamily.

The protein localises to the cytoplasm. It carries out the reaction phosphoenolpyruvate + UDP-N-acetyl-alpha-D-glucosamine = UDP-N-acetyl-3-O-(1-carboxyvinyl)-alpha-D-glucosamine + phosphate. It participates in cell wall biogenesis; peptidoglycan biosynthesis. Cell wall formation. Adds enolpyruvyl to UDP-N-acetylglucosamine. The protein is UDP-N-acetylglucosamine 1-carboxyvinyltransferase 1 of Clostridium acetobutylicum (strain ATCC 824 / DSM 792 / JCM 1419 / IAM 19013 / LMG 5710 / NBRC 13948 / NRRL B-527 / VKM B-1787 / 2291 / W).